Reading from the N-terminus, the 302-residue chain is Quinolinate synthase (302 aa).

Residues H24 and S41 each contribute to the iminosuccinate site. Residue C86 participates in [4Fe-4S] cluster binding. Residues 112–114 (YVN) and S129 each bind iminosuccinate. C171 lines the [4Fe-4S] cluster pocket. Residues 197 to 199 (HPE) and T214 contribute to the iminosuccinate site. C259 serves as a coordination point for [4Fe-4S] cluster.

Belongs to the quinolinate synthase family. Type 2 subfamily. Requires [4Fe-4S] cluster as cofactor.

It localises to the cytoplasm. It catalyses the reaction iminosuccinate + dihydroxyacetone phosphate = quinolinate + phosphate + 2 H2O + H(+). It participates in cofactor biosynthesis; NAD(+) biosynthesis; quinolinate from iminoaspartate: step 1/1. In terms of biological role, catalyzes the condensation of iminoaspartate with dihydroxyacetone phosphate to form quinolinate. In Dehalococcoides mccartyi (strain CBDB1), this protein is Quinolinate synthase.